We begin with the raw amino-acid sequence, 512 residues long: uncharacterized protein (512 aa).

Residues 1-22 (MVSSLIYSLCAVSGLLATTVNG) form the signal peptide. Asparagine 167 carries N-linked (GlcNAc...) asparagine glycosylation. The segment at 251–282 (SAASPPIYEPDRQTDPEDPETGRNNNQGFEGL) is disordered.

The protein localises to the secreted. This is an uncharacterized protein from Arthroderma benhamiae (strain ATCC MYA-4681 / CBS 112371) (Trichophyton mentagrophytes).